The following is a 657-amino-acid chain: Interferon-induced GTP-binding protein Mx1 (657 aa).

M1 is modified (N-acetylmethionine). Residues 63–336 enclose the Dynamin-type G domain; it reads DLALPAIAVI…LITHICKTLP (274 aa). The segment at 73–80 is G1 motif; it reads GDQSSGKS. Position 73–80 (73–80) interacts with GTP; sequence GDQSSGKS. The interval 98-100 is G2 motif; that stretch reads VTR. Residues 174–177 are G3 motif; sequence DLPG. GTP-binding positions include 174-178 and 243-246; these read DLPGI and TKPD. A G4 motif region spans residues 243 to 246; it reads TKPD. Positions 275–278 are G5 motif; sequence KCRG. The segment at 337–362 is bundle signaling element (BSE); it reads LLENQIKENHEKITEELQKYGSDVPE. The interval 362–529 is middle domain; the sequence is EDEHEKMFFL…HFQMEQIVYC (168 aa). Residues 363–627 are stalk; the sequence is DEHEKMFFLI…KDTYSWLLKE (265 aa). Basic and acidic residues predominate over residues 540–551; the sequence is RVREKDSDEEKK. The segment at 540–559 is disordered; it reads RVREKDSDEEKKKKTSSMSH. The critical for lipid-binding stretch occupies residues 550–553; it reads KKKK. The region spanning 569–657 is the GED domain; that stretch reads LSEILEHLLA…ARRRLAKFPG (89 aa).

It belongs to the TRAFAC class dynamin-like GTPase superfamily. Dynamin/Fzo/YdjA family. In terms of assembly, homooligomer. Oligomerizes into multimeric filamentous or ring-like structures by virtue of its stalk domain. Oligomerization is critical for GTPase activity, protein stability, and recognition of viral target structures. Interacts with TRPC1, TRPC3, TRPC4, TRPC5, TRPC6 and TRPC7. Interacts with HSPA5. Interacts with TUBB/TUBB5. Interacts with DDX39A and DDX39B. In terms of processing, ISGylated.

The protein localises to the cytoplasm. It is found in the endoplasmic reticulum membrane. The protein resides in the perinuclear region. Functionally, interferon-induced dynamin-like GTPase with antiviral activity. In Canis lupus familiaris (Dog), this protein is Interferon-induced GTP-binding protein Mx1 (MX1).